A 204-amino-acid chain; its full sequence is Thymidylate kinase (204 aa).

ATP is bound at residue Gly10–Thr17.

The protein belongs to the thymidylate kinase family.

The catalysed reaction is dTMP + ATP = dTDP + ADP. Phosphorylation of dTMP to form dTDP in both de novo and salvage pathways of dTTP synthesis. The polypeptide is Thymidylate kinase (Cutibacterium acnes (strain DSM 16379 / KPA171202) (Propionibacterium acnes)).